The sequence spans 228 residues: uncharacterized protein (228 aa).

The next 4 helical transmembrane spans lie at 37 to 54 (WCMHASLTLVLLALTLIV), 67 to 89 (VVSIYLAFFFSLKILHTFFSTGV), 104 to 126 (HIGIRLFLLLCASSLFYACTSRL), and 138 to 160 (VLHVRSTAYTTPCAVYVMMLVLY).

It localises to the cell membrane. This is an uncharacterized protein from Treponema pallidum (strain Nichols).